Consider the following 443-residue polypeptide: Zinc finger protein 713 (443 aa).

Positions 1 to 10 (MPSQNAVFSQ) are enriched in polar residues. Disordered regions lie at residues 1–23 (MPSQ…NDGS) and 99–118 (DTHP…TSQN). Residues 32 to 102 (LTFQDVAVDF…ERDSLLDTHP (71 aa)) enclose the KRAB domain. Basic and acidic residues predominate over residues 99-112 (DTHPDGENRPEIKK). The segment at 255–280 (HTAEKPSECGKAFSHTSSLSQPQMLL) adopts a C2H2-type 1; degenerate zinc-finger fold. 5 consecutive C2H2-type zinc fingers follow at residues 286–308 (YKCD…QRIH), 314–336 (FICN…LRIH), 342–364 (YKCN…HRLH), 370–392 (YECG…ERTH), and 398–420 (YKCN…RKIH).

It belongs to the krueppel C2H2-type zinc-finger protein family. Expressed in fetal and adult brain.

The protein resides in the nucleus. May be involved in transcriptional regulation. This Homo sapiens (Human) protein is Zinc finger protein 713.